Reading from the N-terminus, the 359-residue chain is Aminomethyltransferase (359 aa).

This sequence belongs to the GcvT family. The glycine cleavage system is composed of four proteins: P, T, L and H.

The catalysed reaction is N(6)-[(R)-S(8)-aminomethyldihydrolipoyl]-L-lysyl-[protein] + (6S)-5,6,7,8-tetrahydrofolate = N(6)-[(R)-dihydrolipoyl]-L-lysyl-[protein] + (6R)-5,10-methylene-5,6,7,8-tetrahydrofolate + NH4(+). Functionally, the glycine cleavage system catalyzes the degradation of glycine. In Pseudoalteromonas atlantica (strain T6c / ATCC BAA-1087), this protein is Aminomethyltransferase.